We begin with the raw amino-acid sequence, 311 residues long: Cytochrome f (311 aa).

A signal peptide spans 1-27 (MKHFFKSLTLAIALAASVLFWSPQAQA). The heme site is built by Tyr-28, Cys-48, Cys-51, and His-52. The helical transmembrane segment at 279–296 (WLLVFFAAITLSQILLVL) threads the bilayer.

This sequence belongs to the cytochrome f family. The 4 large subunits of the cytochrome b6-f complex are cytochrome b6, subunit IV (17 kDa polypeptide, PetD), cytochrome f and the Rieske protein, while the 4 small subunits are PetG, PetL, PetM and PetN. The complex functions as a dimer. Heme serves as cofactor.

The protein localises to the cellular thylakoid membrane. Functionally, component of the cytochrome b6-f complex, which mediates electron transfer between photosystem II (PSII) and photosystem I (PSI), cyclic electron flow around PSI, and state transitions. This Synechococcus elongatus protein is Cytochrome f.